Consider the following 424-residue polypeptide: Histone-binding protein RBBP7 (424 aa).

WD repeat units follow at residues 47-121 (QWLP…KINH), 127-172 (RARY…LRLR), 180-216 (GLSW…KIVD), 227-268 (VVED…HSVD), 274-311 (VNCL…LHSF), 317-368 (EIFQ…LFIH), and 375-402 (ISDF…IWQM). Residues 359 to 404 (DGPPELLFIHGGHTAKISDFSWNPNEPWVICSVSEDNIMQIWQMAE) are interaction with HAT1.

This sequence belongs to the WD repeat RBAP46/RBAP48/MSI1 family. As to quaternary structure, binds directly to helix 1 of the histone fold of histone H4, a region that is not accessible when H4 is in chromatin. Also interacts with histone H2B and HAT1.

The protein resides in the nucleus. Core histone-binding subunit that may target chromatin remodeling factors, histone acetyltransferases and histone deacetylases to their histone substrates in a manner that is regulated by nucleosomal DNA. Component of several complexes which regulate chromatin metabolism. The sequence is that of Histone-binding protein RBBP7 (RBBP7) from Gallus gallus (Chicken).